A 550-amino-acid chain; its full sequence is Hydroxylamine reductase (550 aa).

[2Fe-2S] cluster is bound by residues Cys-3, Cys-6, Cys-18, and Cys-25. The hybrid [4Fe-2O-2S] cluster site is built by His-249, Glu-273, Cys-317, Cys-405, Cys-433, Cys-458, Glu-492, and Lys-494. Cysteine persulfide is present on Cys-405.

The protein belongs to the HCP family. [2Fe-2S] cluster serves as cofactor. It depends on hybrid [4Fe-2O-2S] cluster as a cofactor.

Its subcellular location is the cytoplasm. It carries out the reaction A + NH4(+) + H2O = hydroxylamine + AH2 + H(+). Functionally, catalyzes the reduction of hydroxylamine to form NH(3) and H(2)O. This is Hydroxylamine reductase from Salmonella paratyphi A (strain ATCC 9150 / SARB42).